The sequence spans 305 residues: MAKDIEISASESKFILEALRQNYRLDGRSFDQFRDVEITFGKEFGDVSVKMGNTKVHCRISCQIAQPYEDRPFEGLFVISTEISPMAGSQFENGNITGEDEVLCSRIIEKSVRRSGALDVEGLCIVAGSKCWAVRADVHFLDCDGGFIDASCIAVMAGLMHFKKPDITVHGEQIIVHPVNEREPVPLGILHIPICVTFSFFNPQDTEENIKGETNSEISIIDATLKEELLRDGVLTVTLNKNREVVQVSKAGGLPMDALTLMKCCHEAYSIIEKITDQILQLLKEDSEKRNKYAAMLTSENAREI.

The protein belongs to the RNase PH family. As to quaternary structure, component of the RNA exosome complex. Specifically part of the catalytically inactive RNA exosome core complex (Exo-9) which may associate with the catalytic subunits RRP6 and DIS3 in cytoplasmic- and nuclear-specific RNA exosome complex forms. Exo-9 is formed by a hexameric base ring of RNase PH domain-containing subunits and a cap ring consisting of CSL4, RRP4 and RRP40. Interacts with LRP1.

It is found in the cytoplasm. The protein resides in the nucleus. Its subcellular location is the nucleolus. Non-catalytic component of the RNA exosome complex which has 3'-&gt;5' exoribonuclease activity and participates in a multitude of cellular RNA processing and degradation events. In the nucleus, the RNA exosome complex is involved in proper maturation of stable RNA species such as rRNA, snRNA and snoRNA, in the elimination of RNA processing by-products and non-coding 'pervasive' transcripts, such as antisense RNA species and cryptic unstable transcripts (CUTs), and of mRNAs with processing defects, thereby limiting or excluding their export to the cytoplasm. In the cytoplasm, the RNA exosome complex is involved in general mRNA turnover and in RNA surveillance pathways, preventing translation of aberrant mRNAs. The catalytic inactive RNA exosome core complex of 9 subunits (Exo-9) is proposed to play a pivotal role in the binding and presentation of RNA for ribonucleolysis, and to serve as a scaffold for the association with catalytic subunits and accessory proteins or complexes. RRP45 is part of the hexameric ring of RNase PH domain-containing subunits proposed to form a central channel which threads RNA substrates for degradation. This chain is Exosome complex component RRP45 (RRP45), found in Saccharomyces cerevisiae (strain ATCC 204508 / S288c) (Baker's yeast).